Consider the following 207-residue polypeptide: Dephospho-CoA kinase (207 aa).

Residues 10 to 207 enclose the DPCK domain; it reads ILGLTGGIGS…FYLTLRGGQS (198 aa). An ATP-binding site is contributed by 18–23; that stretch reads GSGKSA.

Belongs to the CoaE family.

It localises to the cytoplasm. It carries out the reaction 3'-dephospho-CoA + ATP = ADP + CoA + H(+). The protein operates within cofactor biosynthesis; coenzyme A biosynthesis; CoA from (R)-pantothenate: step 5/5. Its function is as follows. Catalyzes the phosphorylation of the 3'-hydroxyl group of dephosphocoenzyme A to form coenzyme A. This Pseudomonas savastanoi pv. phaseolicola (strain 1448A / Race 6) (Pseudomonas syringae pv. phaseolicola (strain 1448A / Race 6)) protein is Dephospho-CoA kinase.